A 110-amino-acid chain; its full sequence is DNA-directed RNA polymerase subunit omega (110 aa).

Belongs to the RNA polymerase subunit omega family. The RNAP catalytic core consists of 2 alpha, 1 beta, 1 beta' and 1 omega subunit. When a sigma factor is associated with the core the holoenzyme is formed, which can initiate transcription.

It carries out the reaction RNA(n) + a ribonucleoside 5'-triphosphate = RNA(n+1) + diphosphate. Its function is as follows. Promotes RNA polymerase assembly. Latches the N- and C-terminal regions of the beta' subunit thereby facilitating its interaction with the beta and alpha subunits. The sequence is that of DNA-directed RNA polymerase subunit omega (rpoZ) from Mycobacterium bovis (strain ATCC BAA-935 / AF2122/97).